A 665-amino-acid chain; its full sequence is Fructose-1,6-bisphosphatase class 3 (665 aa).

Belongs to the FBPase class 3 family. It depends on Mn(2+) as a cofactor.

The catalysed reaction is beta-D-fructose 1,6-bisphosphate + H2O = beta-D-fructose 6-phosphate + phosphate. Its pathway is carbohydrate biosynthesis; gluconeogenesis. In Clostridium novyi (strain NT), this protein is Fructose-1,6-bisphosphatase class 3.